Reading from the N-terminus, the 328-residue chain is Probable transcription factor At4g00610 (328 aa).

A disordered region spans residues 31 to 143 (AKNKTLVTPS…ERAKTETETG (113 aa)). The span at 35–54 (TLVTPSTVKKSSDVASTSKK) shows a compositional bias: polar residues. Residues 84–108 (SEEEEEDEPSSDSESGSESESDTEA) are compositionally biased toward acidic residues. The segment covering 122–143 (NEKRQSEGKPEEERAKTETETG) has biased composition (basic and acidic residues).

The protein belongs to the GeBP family.

The sequence is that of Probable transcription factor At4g00610 from Arabidopsis thaliana (Mouse-ear cress).